Here is a 110-residue protein sequence, read N- to C-terminus: Phosphoribosyl-ATP pyrophosphatase (110 aa).

It belongs to the PRA-PH family.

The protein localises to the cytoplasm. The catalysed reaction is 1-(5-phospho-beta-D-ribosyl)-ATP + H2O = 1-(5-phospho-beta-D-ribosyl)-5'-AMP + diphosphate + H(+). The protein operates within amino-acid biosynthesis; L-histidine biosynthesis; L-histidine from 5-phospho-alpha-D-ribose 1-diphosphate: step 2/9. The sequence is that of Phosphoribosyl-ATP pyrophosphatase from Clostridium botulinum (strain Kyoto / Type A2).